The following is a 506-amino-acid chain: MNTMTLTPGQLSLSQLYDIWRHPVQLRLDASAIDGINASVACVNDIVAEGRTAYGINTGFGLLAQTRIADEDLQNLQRSLVLSHAAGVGDPLDDAMVRLIMVLKINSLARGFSGIRLSVIEALIALVNAGVYPLIPAKGSVGASGDLAPLAHLSLTLLGEGKARWQGEWLPAQTALKKAGLEPVALAAKEGLALLNGTQASTAFALRGLFEAQELFASAVVCGALTTEAVLGSRRPFDARIHAARGQQGQIDVARLFRHLLTDTSAIAESHHHCHKVQDPYSLRCQPQVMGACLTQLRQTKEVLLAEANAVSDNPLVFADAGEVISGGNFHAEPVAMVADNLALAIAEIGALSERRIALMMDKHMSQLPPFLVKNGGVNSGFMIAQVTAAALASENKALAHPHSVDSLPTSANQEDHVSMAPAAGRRLWEMAANTRGIIAVEWLAACQGIDLREGLTSSPLLEQARQTLRERVAHYTQDRFFAPDIECATALLAQGALQRLVPDFM.

The segment at residues 143–145 (ASG) is a cross-link (5-imidazolinone (Ala-Gly)). Ser-144 carries the post-translational modification 2,3-didehydroalanine (Ser).

Belongs to the PAL/histidase family. Contains an active site 4-methylidene-imidazol-5-one (MIO), which is formed autocatalytically by cyclization and dehydration of residues Ala-Ser-Gly.

The protein localises to the cytoplasm. It catalyses the reaction L-histidine = trans-urocanate + NH4(+). The protein operates within amino-acid degradation; L-histidine degradation into L-glutamate; N-formimidoyl-L-glutamate from L-histidine: step 1/3. The chain is Histidine ammonia-lyase from Salmonella paratyphi B (strain ATCC BAA-1250 / SPB7).